The following is a 413-amino-acid chain: L-cysteine:1D-myo-inositol 2-amino-2-deoxy-alpha-D-glucopyranoside ligase (413 aa).

The interval M1–L21 is disordered. C43 provides a ligand contact to Zn(2+). L-cysteinyl-5'-AMP is bound by residues C43–T46, T58, and N81–T83. A 'HIGH' region motif is present at residues I45–H55. Positions E187–P192 match the 'ERGGDP' region motif. W227 is a binding site for L-cysteinyl-5'-AMP. C231 is a Zn(2+) binding site. G249–D251 provides a ligand contact to L-cysteinyl-5'-AMP. H256 is a Zn(2+) binding site. I283 provides a ligand contact to L-cysteinyl-5'-AMP. The 'KMSKS' region signature appears at K289 to S293.

The protein belongs to the class-I aminoacyl-tRNA synthetase family. MshC subfamily. Monomer. Requires Zn(2+) as cofactor.

The enzyme catalyses 1D-myo-inositol 2-amino-2-deoxy-alpha-D-glucopyranoside + L-cysteine + ATP = 1D-myo-inositol 2-(L-cysteinylamino)-2-deoxy-alpha-D-glucopyranoside + AMP + diphosphate + H(+). Functionally, catalyzes the ATP-dependent condensation of GlcN-Ins and L-cysteine to form L-Cys-GlcN-Ins. The chain is L-cysteine:1D-myo-inositol 2-amino-2-deoxy-alpha-D-glucopyranoside ligase from Rhodococcus erythropolis (strain PR4 / NBRC 100887).